We begin with the raw amino-acid sequence, 332 residues long: Transcription initiation factor IIB 2 (332 aa).

Residues Met-1–Tyr-10 are compositionally biased toward polar residues. The interval Met-1 to Val-36 is disordered. A compositionally biased stretch (basic and acidic residues) spans Ala-14–Thr-29. Residues Glu-33–Glu-63 form a TFIIB-type zinc finger. Zn(2+)-binding residues include Cys-37, Cys-40, Cys-55, and Cys-58. Residues Asp-77–Trp-106 are disordered. Repeat copies occupy residues Gly-149–Leu-232 and Gln-243–Glu-324.

It belongs to the TFIIB family.

Stabilizes TBP binding to an archaeal box-A promoter. Also responsible for recruiting RNA polymerase II to the pre-initiation complex (DNA-TBP-TFIIB). The polypeptide is Transcription initiation factor IIB 2 (Haloferax volcanii (strain ATCC 29605 / DSM 3757 / JCM 8879 / NBRC 14742 / NCIMB 2012 / VKM B-1768 / DS2) (Halobacterium volcanii)).